Consider the following 763-residue polypeptide: 5-methyltetrahydropteroyltriglutamate--homocysteine methyltransferase (763 aa).

Residues 16–19 (RELK) and Lys117 each bind 5-methyltetrahydropteroyltri-L-glutamate. L-homocysteine is bound by residues 440–442 (IGS) and Glu493. L-methionine-binding positions include 440–442 (IGS) and Glu493. 5-methyltetrahydropteroyltri-L-glutamate-binding positions include 524 to 525 (RC) and Trp570. Asp608 contributes to the L-homocysteine binding site. An L-methionine-binding site is contributed by Asp608. Glu614 is a binding site for 5-methyltetrahydropteroyltri-L-glutamate. His650, Cys652, and Glu674 together coordinate Zn(2+). The active-site Proton donor is the His703. Cys735 serves as a coordination point for Zn(2+).

The protein belongs to the vitamin-B12 independent methionine synthase family. Zn(2+) serves as cofactor.

The catalysed reaction is 5-methyltetrahydropteroyltri-L-glutamate + L-homocysteine = tetrahydropteroyltri-L-glutamate + L-methionine. It participates in amino-acid biosynthesis; L-methionine biosynthesis via de novo pathway; L-methionine from L-homocysteine (MetE route): step 1/1. Functionally, catalyzes the transfer of a methyl group from 5-methyltetrahydrofolate to homocysteine resulting in methionine formation. The polypeptide is 5-methyltetrahydropteroyltriglutamate--homocysteine methyltransferase (Alcanivorax borkumensis (strain ATCC 700651 / DSM 11573 / NCIMB 13689 / SK2)).